The sequence spans 349 residues: Acyl-CoA:acyl-CoA alkyltransferase (349 aa).

Glutamate 97 serves as the catalytic Proton acceptor. Residue cysteine 123 is the Acyl-thioester intermediate of the active site.

The protein belongs to the thiolase-like superfamily. OleA family.

It catalyses the reaction a 1,2-saturated acyl-CoA + an acyl-CoA + H2O = an (R)-2-alkyl-3-oxoalkanoate + 2 CoA + H(+). Functionally, involved in olefin biosynthesis. Catalyzes a non-decarboxylative head-to-head Claisen condensation of two acyl-CoA molecules, generating an (R)-2-alkyl-3-oxoalkanoate. The S.oneidensis oleABCD genes produce 3,6,9,12,15,19,22,25,28-hentriacontanonaene, which may aid the cells in adapting to a sudden drop in temperature. This chain is Acyl-CoA:acyl-CoA alkyltransferase, found in Shewanella oneidensis (strain ATCC 700550 / JCM 31522 / CIP 106686 / LMG 19005 / NCIMB 14063 / MR-1).